Reading from the N-terminus, the 1454-residue chain is Probable cleavage and polyadenylation specificity factor subunit 1 (1454 aa).

Residues 736–765 are disordered; the sequence is KQSNTRKRKRLGHDAIQSSRGGEQSDAIDP.

This sequence belongs to the CPSF1 family. CPSF is a heterotetramer composed of four distinct subunits 160 (cpsf-1), 100 (cpsf-2), 70 (cpsf-3), and 30 kDa (cpsf-4).

The protein localises to the nucleus. In terms of biological role, CPSF plays a key role in pre-mRNA 3'-end formation, recognizing the AAUAAA signal sequence and interacting with poly(A)polymerase and other factors to bring about cleavage and poly(A) addition. This subunit is involved in the RNA recognition step of the polyadenylation reaction. The polypeptide is Probable cleavage and polyadenylation specificity factor subunit 1 (cpsf-1) (Caenorhabditis elegans).